We begin with the raw amino-acid sequence, 177 residues long: MKLPKEGDFITIQSYKHDGRLHRTWRDTMVLKTTENALIGVNDHTLVTESDGRRWVTREPAIVYFHKKYWFNIIAMIRDNGVSYYCNLASPYLMDAEALKYIDYDLDVKVFADGEKRLLDVDEYEMHKQEMHYSPNLDFILKENVKLLVDWINKEKGPFSKAYVSIWYKRYLELKNR.

The Proton donor role is filled by Arg-23. The Mg(2+) site is built by Asn-87, Asp-103, Asp-105, Asp-107, Asp-120, and Glu-123.

This sequence belongs to the Ntdp family. The cofactor is Mg(2+).

The enzyme catalyses a ribonucleoside 5'-triphosphate + H2O = a ribonucleoside 5'-diphosphate + phosphate + H(+). The catalysed reaction is a ribonucleoside 5'-diphosphate + H2O = a ribonucleoside 5'-phosphate + phosphate + H(+). Has nucleoside phosphatase activity towards nucleoside triphosphates and nucleoside diphosphates. This is Nucleoside triphosphate/diphosphate phosphatase from Streptococcus equi subsp. zooepidemicus (strain MGCS10565).